Reading from the N-terminus, the 550-residue chain is Thermosome subunit (550 aa).

Residues 529 to 550 (KEKEGEKGGGGSEDFSSSSDLD) are disordered. Residues 541-550 (EDFSSSSDLD) show a composition bias toward low complexity.

Belongs to the TCP-1 chaperonin family. Forms an oligomeric complex of eight-membered rings.

Molecular chaperone; binds unfolded polypeptides in vitro, and has a weak ATPase activity. The sequence is that of Thermosome subunit (ths) from Pyrococcus abyssi (strain GE5 / Orsay).